Consider the following 185-residue polypeptide: ATP synthase subunit delta, chloroplastic (185 aa).

It belongs to the ATPase delta chain family. F-type ATPases have 2 components, F(1) - the catalytic core - and F(0) - the membrane proton channel. F(1) has five subunits: alpha(3), beta(3), gamma(1), delta(1), epsilon(1). CF(0) has four main subunits: a(1), b(1), b'(1) and c(10-14). The alpha and beta chains form an alternating ring which encloses part of the gamma chain. F(1) is attached to F(0) by a central stalk formed by the gamma and epsilon chains, while a peripheral stalk is formed by the delta, b and b' chains.

It localises to the plastid. The protein resides in the chloroplast thylakoid membrane. In terms of biological role, f(1)F(0) ATP synthase produces ATP from ADP in the presence of a proton or sodium gradient. F-type ATPases consist of two structural domains, F(1) containing the extramembraneous catalytic core and F(0) containing the membrane proton channel, linked together by a central stalk and a peripheral stalk. During catalysis, ATP synthesis in the catalytic domain of F(1) is coupled via a rotary mechanism of the central stalk subunits to proton translocation. Its function is as follows. This protein is part of the stalk that links CF(0) to CF(1). It either transmits conformational changes from CF(0) to CF(1) or is implicated in proton conduction. The protein is ATP synthase subunit delta, chloroplastic of Gracilaria tenuistipitata var. liui (Red alga).